Reading from the N-terminus, the 497-residue chain is Cobyric acid synthase (497 aa).

Positions 251-443 (DLKIGVVWYP…LHGLFDNDFF (193 aa)) constitute a GATase cobBQ-type domain. Catalysis depends on Cys333, which acts as the Nucleophile. The active site involves His435.

The protein belongs to the CobB/CobQ family. CobQ subfamily.

Its pathway is cofactor biosynthesis; adenosylcobalamin biosynthesis. Its function is as follows. Catalyzes amidations at positions B, D, E, and G on adenosylcobyrinic A,C-diamide. NH(2) groups are provided by glutamine, and one molecule of ATP is hydrogenolyzed for each amidation. The polypeptide is Cobyric acid synthase (Carboxydothermus hydrogenoformans (strain ATCC BAA-161 / DSM 6008 / Z-2901)).